A 934-amino-acid polypeptide reads, in one-letter code: Desmocollin 2-like protein (934 aa).

Cadherin domains follow at residues 167–274, 274–381, 382–494, and 495–600; these read RWRP…APEF, FTGN…PPTF, KEKL…GPEF, and NPNI…IPVI. The Extracellular segment spans residues 167-716; the sequence is RWRPLPFSVV…SASVSLGNYG (550 aa). N-linked (GlcNAc...) asparagine glycosylation is found at Asn197, Asn296, and Asn316. N-linked (GlcNAc...) asparagine glycans are attached at residues Asn509, Asn565, and Asn569. A helical transmembrane segment spans residues 717 to 737; the sequence is ILALVLSGLLLLLLCLFLIFF. Residues 738–934 lie on the Cytoplasmic side of the membrane; it reads CTTKRDKLQI…ICYTTNKTGK (197 aa).

As to expression, expressed at low levels in the brain and heart.

The protein localises to the cell junction. It is found in the desmosome. The protein resides in the cell membrane. In terms of biological role, a component of desmosome cell-cell junctions which are required for positive regulation of cellular adhesion. Involved in the interaction of plaque proteins and intermediate filaments mediating cell-cell adhesion. Involved in the formation and structural organization of desmosome cell-cell junctions during embryonic development. Required for embryogenesis, specifically for progression of epiboly and normal convergence-extension movements during gastrulation. Required for the development of desmosomal-rich midlines in the heart. Plays an important role in ventricular contraction and resulting heart stroke volume. This chain is Desmocollin 2-like protein, found in Danio rerio (Zebrafish).